Here is a 523-residue protein sequence, read N- to C-terminus: Glutamate--cysteine ligase, chloroplastic (523 aa).

A disulfide bridge connects residues cysteine 187 and cysteine 407.

This sequence belongs to the carboxylate-amine ligase family. Glutamate--cysteine ligase type 2 subfamily. As to quaternary structure, homodimer or monomer when oxidized or reduced, respectively. Post-translationally, the Cys-187-Cys-407 disulfide bridge is known to modulate the enzyme activity according to the redox status. The oxidized form constitutes the active enzyme.

The protein localises to the plastid. Its subcellular location is the chloroplast. The enzyme catalyses L-cysteine + L-glutamate + ATP = gamma-L-glutamyl-L-cysteine + ADP + phosphate + H(+). It functions in the pathway sulfur metabolism; glutathione biosynthesis; glutathione from L-cysteine and L-glutamate: step 1/2. The sequence is that of Glutamate--cysteine ligase, chloroplastic (GSH1) from Solanum lycopersicum (Tomato).